Here is a 249-residue protein sequence, read N- to C-terminus: tRNA (guanine-N(1)-)-methyltransferase (249 aa).

S-adenosyl-L-methionine contacts are provided by residues glycine 112 and 132–137 (LGDFVL).

It belongs to the RNA methyltransferase TrmD family. As to quaternary structure, homodimer.

Its subcellular location is the cytoplasm. The enzyme catalyses guanosine(37) in tRNA + S-adenosyl-L-methionine = N(1)-methylguanosine(37) in tRNA + S-adenosyl-L-homocysteine + H(+). In terms of biological role, specifically methylates guanosine-37 in various tRNAs. In Geobacter sp. (strain M21), this protein is tRNA (guanine-N(1)-)-methyltransferase.